The chain runs to 171 residues: Ribosome maturation factor RimM (171 aa).

In terms of domain architecture, PRC barrel spans 96 to 169; sequence EGEFFIADMI…KMIIDPIKGM (74 aa).

This sequence belongs to the RimM family. Binds ribosomal protein uS19.

It localises to the cytoplasm. An accessory protein needed during the final step in the assembly of 30S ribosomal subunit, possibly for assembly of the head region. Essential for efficient processing of 16S rRNA. May be needed both before and after RbfA during the maturation of 16S rRNA. It has affinity for free ribosomal 30S subunits but not for 70S ribosomes. In Clostridioides difficile (strain 630) (Peptoclostridium difficile), this protein is Ribosome maturation factor RimM.